The sequence spans 273 residues: Rhamnulose-1-phosphate aldolase (273 aa).

E117 is an active-site residue. Zn(2+) contacts are provided by H140, H142, and H211.

Belongs to the aldolase class II family. RhaD subfamily. Zn(2+) serves as cofactor.

The protein resides in the cytoplasm. The catalysed reaction is L-rhamnulose 1-phosphate = (S)-lactaldehyde + dihydroxyacetone phosphate. Its pathway is carbohydrate degradation; L-rhamnose degradation; glycerone phosphate from L-rhamnose: step 3/3. In terms of biological role, catalyzes the reversible cleavage of L-rhamnulose-1-phosphate to dihydroxyacetone phosphate (DHAP) and L-lactaldehyde. The sequence is that of Rhamnulose-1-phosphate aldolase from Listeria monocytogenes serotype 4b (strain CLIP80459).